Reading from the N-terminus, the 247-residue chain is 2,3-bisphosphoglycerate-dependent phosphoglycerate mutase (247 aa).

Substrate is bound by residues 8 to 15 (RHGESVWN), 21 to 22 (TG), R60, 87 to 90 (ERHY), K98, 114 to 115 (RR), and 183 to 184 (GN). The active-site Tele-phosphohistidine intermediate is H9. E87 functions as the Proton donor/acceptor in the catalytic mechanism.

The protein belongs to the phosphoglycerate mutase family. BPG-dependent PGAM subfamily. In terms of assembly, homodimer.

The enzyme catalyses (2R)-2-phosphoglycerate = (2R)-3-phosphoglycerate. The protein operates within carbohydrate degradation; glycolysis; pyruvate from D-glyceraldehyde 3-phosphate: step 3/5. Its function is as follows. Catalyzes the interconversion of 2-phosphoglycerate and 3-phosphoglycerate. This chain is 2,3-bisphosphoglycerate-dependent phosphoglycerate mutase, found in Geobacter metallireducens (strain ATCC 53774 / DSM 7210 / GS-15).